Here is a 647-residue protein sequence, read N- to C-terminus: Macrolide export ATP-binding/permease protein MacB (647 aa).

The 239-residue stretch at 5–243 (LELKGIERSY…TQTPSLTSKI (239 aa)) folds into the ABC transporter domain. 41-48 (GASGSGKS) provides a ligand contact to ATP. A run of 4 helical transmembrane segments spans residues 272 to 292 (LLTM…LVIG), 522 to 542 (LFLT…VMNI), 576 to 596 (ILVC…IAFI), and 610 to 630 (PIAL…FGFL).

Belongs to the ABC transporter superfamily. Macrolide exporter (TC 3.A.1.122) family. In terms of assembly, homodimer. Part of the tripartite efflux system MacAB-TolC, which is composed of an inner membrane transporter, MacB, a periplasmic membrane fusion protein, MacA, and an outer membrane component, TolC. The complex forms a large protein conduit and can translocate molecules across both the inner and outer membranes. Interacts with MacA.

Its subcellular location is the cell inner membrane. In terms of biological role, part of the tripartite efflux system MacAB-TolC. MacB is a non-canonical ABC transporter that contains transmembrane domains (TMD), which form a pore in the inner membrane, and an ATP-binding domain (NBD), which is responsible for energy generation. Confers resistance against macrolides. The chain is Macrolide export ATP-binding/permease protein MacB from Photorhabdus laumondii subsp. laumondii (strain DSM 15139 / CIP 105565 / TT01) (Photorhabdus luminescens subsp. laumondii).